The following is a 269-amino-acid chain: MSLYQRTNFQSHPYHLVWPSPWPFYNSLSLFILTTSGVLTMHGFSNMYIILFIAFINLVWCMTLWFRDIISEGTYLGNHTNAVQRGLNLGVGLFIASEALFFLAIFWTFFHSSLSPNVELGAQWPPLGIKAIDPFELPLLNNIILLSSGVTVNSNYHSLIQGNRKGALYGLVATILLAIVFTIFQGIEYSVSSFTISDGVYGSCFYFSTGFHGFHVLIGTAFLSVGLWRLLGYHLTDHHHLGYESGILYWHFVDVVWLILYVCIYFWGY.

7 helical membrane passes run 24–44 (FYNS…MHGF), 46–66 (NMYI…TLWF), 90–110 (GVGL…WTFF), 132–152 (IDPF…GVTV), 167–187 (ALYG…FQGI), 207–227 (FSTG…SVGL), and 247–267 (ILYW…IYFW).

It belongs to the cytochrome c oxidase subunit 3 family. As to quaternary structure, component of the cytochrome c oxidase (complex IV, CIV), a multisubunit enzyme composed of a catalytic core of 3 subunits and several supernumerary subunits. The complex exists as a monomer or a dimer and forms supercomplexes (SCs) in the inner mitochondrial membrane with ubiquinol-cytochrome c oxidoreductase (cytochrome b-c1 complex, complex III, CIII).

It is found in the mitochondrion inner membrane. The enzyme catalyses 4 Fe(II)-[cytochrome c] + O2 + 8 H(+)(in) = 4 Fe(III)-[cytochrome c] + 2 H2O + 4 H(+)(out). Component of the cytochrome c oxidase, the last enzyme in the mitochondrial electron transport chain which drives oxidative phosphorylation. The respiratory chain contains 3 multisubunit complexes succinate dehydrogenase (complex II, CII), ubiquinol-cytochrome c oxidoreductase (cytochrome b-c1 complex, complex III, CIII) and cytochrome c oxidase (complex IV, CIV), that cooperate to transfer electrons derived from NADH and succinate to molecular oxygen, creating an electrochemical gradient over the inner membrane that drives transmembrane transport and the ATP synthase. Cytochrome c oxidase is the component of the respiratory chain that catalyzes the reduction of oxygen to water. Electrons originating from reduced cytochrome c in the intermembrane space (IMS) are transferred via the dinuclear copper A center (CU(A)) of subunit 2 and heme A of subunit 1 to the active site in subunit 1, a binuclear center (BNC) formed by heme A3 and copper B (CU(B)). The BNC reduces molecular oxygen to 2 water molecules using 4 electrons from cytochrome c in the IMS and 4 protons from the mitochondrial matrix. This Trichophyton rubrum (Athlete's foot fungus) protein is Cytochrome c oxidase subunit 3 (COXIII).